The sequence spans 218 residues: MILQISNAVDTDTVKSIVAGLDAGQFSDGKKTAGWAAKDVKNNQQLSGKKSEAATQVLLDRLQQNALVQSVMRPKQVARVTINRYQQGEYYGTHMDDSLMNGVRTDISFTLGLSPLSDFEGGELVIEDASGERSWRLGQGDILMYPSHYLHRVNPVTKGSRLAMIGWVQSLVKQPNYRELLFDIEQSLKAEFDANGKSENFDRLTKVFHNLLREWSDV.

The region spanning 76–170 (QVARVTINRY…RLAMIGWVQS (95 aa)) is the Fe2OG dioxygenase domain. Residues His94, Asp96, and His151 each contribute to the Fe cation site. Arg161 provides a ligand contact to 2-oxoglutarate.

Fe(2+) serves as cofactor. The cofactor is L-ascorbate.

This Idiomarina loihiensis (strain ATCC BAA-735 / DSM 15497 / L2-TR) protein is PKHD-type hydroxylase IL0759.